The primary structure comprises 368 residues: Phosphate acyltransferase (368 aa).

Positions 337–368 are disordered; sequence LGDGEHDAGGAGQASPAAGHHAEPSAAQSSKA.

This sequence belongs to the PlsX family. In terms of assembly, homodimer. Probably interacts with PlsY.

Its subcellular location is the cytoplasm. The catalysed reaction is a fatty acyl-[ACP] + phosphate = an acyl phosphate + holo-[ACP]. It participates in lipid metabolism; phospholipid metabolism. In terms of biological role, catalyzes the reversible formation of acyl-phosphate (acyl-PO(4)) from acyl-[acyl-carrier-protein] (acyl-ACP). This enzyme utilizes acyl-ACP as fatty acyl donor, but not acyl-CoA. This chain is Phosphate acyltransferase, found in Burkholderia orbicola (strain MC0-3).